Here is a 261-residue protein sequence, read N- to C-terminus: Calcium-binding protein 8 (261 aa).

The tract at residues 1-39 (MRLPEQPGEGKPENEKKGDGGALGGGEEPPRSQAPDFPT) is disordered. At 1–234 (MRLPEQPGEG…QNRQTCVRKS (234 aa)) the chain is on the cytoplasmic side. Basic and acidic residues predominate over residues 8–19 (GEGKPENEKKGD). EF-hand domains are found at residues 78–113 (EELD…LGYM) and 114–149 (PSEV…KLVS). Aspartate 91, aspartate 93, asparagine 95, glutamate 102, aspartate 127, aspartate 129, aspartate 131, glutamine 133, and glutamate 138 together coordinate Ca(2+). The chain crosses the membrane as a helical; Anchor for type IV membrane protein span at residues 235 to 255 (LICAFAMAFIISVMLIAANQI). Residues 256–261 (LRSGME) lie on the Extracellular side of the membrane.

In terms of assembly, interacts with PI4KB. This binding competes with FREQ/NCS1 binding in a calcium-dependent manner. Brain specific.

Its subcellular location is the golgi apparatus. It localises to the trans-Golgi network membrane. The protein resides in the cytoplasm. It is found in the perinuclear region. The protein localises to the cell membrane. In terms of biological role, negatively regulates Golgi-to-plasma membrane trafficking by interacting with PI4KB and inhibiting its activity. May play a role in the physiology of neurons and is potentially important in memory and learning. This Homo sapiens (Human) protein is Calcium-binding protein 8 (CALN1).